A 631-amino-acid chain; its full sequence is Chaperone protein DnaK (631 aa).

T197 is subject to Phosphothreonine; by autocatalysis. The disordered stretch occupies residues 600–631 (KKENPQAADAQQGNTANAGKKKDDDVIDAEVE).

The protein belongs to the heat shock protein 70 family.

Functionally, acts as a chaperone. The protein is Chaperone protein DnaK of Wolinella succinogenes (strain ATCC 29543 / DSM 1740 / CCUG 13145 / JCM 31913 / LMG 7466 / NCTC 11488 / FDC 602W) (Vibrio succinogenes).